Here is a 464-residue protein sequence, read N- to C-terminus: 3-isopropylmalate dehydratase large subunit (464 aa).

Positions 337, 397, and 400 each coordinate [4Fe-4S] cluster.

The protein belongs to the aconitase/IPM isomerase family. LeuC type 1 subfamily. Heterodimer of LeuC and LeuD. The cofactor is [4Fe-4S] cluster.

The catalysed reaction is (2R,3S)-3-isopropylmalate = (2S)-2-isopropylmalate. The protein operates within amino-acid biosynthesis; L-leucine biosynthesis; L-leucine from 3-methyl-2-oxobutanoate: step 2/4. In terms of biological role, catalyzes the isomerization between 2-isopropylmalate and 3-isopropylmalate, via the formation of 2-isopropylmaleate. The sequence is that of 3-isopropylmalate dehydratase large subunit from Bacillus cereus (strain 03BB102).